Reading from the N-terminus, the 465-residue chain is Protein dml1 (465 aa).

The residue at position 446 (S446) is a Phosphoserine.

This sequence belongs to the misato family.

It localises to the mitochondrion. Functionally, involved in the partitioning of the mitochondrial organelle and mitochondrial DNA (mtDNA) inheritance. This chain is Protein dml1 (dml1), found in Schizosaccharomyces pombe (strain 972 / ATCC 24843) (Fission yeast).